An 840-amino-acid chain; its full sequence is OTU domain-containing protein 7B (840 aa).

The tract at residues 49–88 (AGNLSPPFSGGSTCPKTPEKGGSDREPTRPSRPILQRQDD) is disordered. A compositionally biased stretch (basic and acidic residues) spans 65–77 (TPEKGGSDREPTR). Residue Ser-100 is modified to Phosphoserine. Positions 152–401 (ERDLIEQSML…AVDPGKGWEW (250 aa)) are TRAF-binding. Residues 167 to 440 (AGRLNWWVSM…VKWIPLSSDS (274 aa)) are catalytic. Residues 183 to 365 (LLPLATTGDG…QAHFSALVSM (183 aa)) form the OTU domain. Residues 187 to 193 (ATTGDGN) are regulatory loop. Residue Asp-191 is part of the active site. Cys-194 functions as the Nucleophile in the catalytic mechanism. His-358 acts as the Proton acceptor in catalysis. The span at 440–452 (SQAPLAQPESPTA) shows a compositional bias: polar residues. Disordered stretches follow at residues 440-592 (SQAP…YSQE) and 653-710 (IMNG…VHCQ). Composition is skewed to basic and acidic residues over residues 456-471 (DEPRSTPESGESDKES) and 488-500 (SKRDREKDKKRAD). Phosphoserine occurs at positions 464, 467, and 471. The short motif at 483–498 (RRKEKSKRDREKDKKR) is the Nuclear localization signal element. A compositionally biased stretch (gly residues) spans 531-541 (KPGGLGSGSGI). Thr-730 is subject to Phosphothreonine. An A20-type zinc finger spans residues 793–828 (PPTQTKCKQPNCSFYGHPETNNLCSCCYREELRRRE). The Zn(2+) site is built by Cys-799, Cys-804, Cys-816, and Cys-819.

It belongs to the peptidase C64 family. In terms of assembly, interacts with TRAF6. Interacts with PARK7, leading to inhibit deubiquitinase activity. Interacts with EGFR, ITCH and NEDD4. Interacts with TRAF3. Interacts with ZAP70 in activated T cells, but not in resting T cells. Phosphorylated by EGFR.

It is found in the cytoplasm. The protein localises to the nucleus. The enzyme catalyses Thiol-dependent hydrolysis of ester, thioester, amide, peptide and isopeptide bonds formed by the C-terminal Gly of ubiquitin (a 76-residue protein attached to proteins as an intracellular targeting signal).. Its activity is regulated as follows. Deubiquitinase activity is inhibited following interaction with PARK7. In terms of biological role, negative regulator of the non-canonical NF-kappa-B pathway that acts by mediating deubiquitination of TRAF3, an inhibitor of the NF-kappa-B pathway, thereby acting as a negative regulator of B-cell responses. In response to non-canonical NF-kappa-B stimuli, deubiquitinates 'Lys-48'-linked polyubiquitin chains of TRAF3, preventing TRAF3 proteolysis and over-activation of non-canonical NF-kappa-B. Negatively regulates mucosal immunity against infections. Deubiquitinates ZAP70, and thereby regulates T cell receptor (TCR) signaling that leads to the activation of NF-kappa-B. Plays a role in T cell homeostasis and is required for normal T cell responses, including production of IFNG and IL2. Mediates deubiquitination of EGFR. Has deubiquitinating activity toward 'Lys-11', 'Lys-48' and 'Lys-63'-linked polyubiquitin chains. Has a much higher catalytic rate with 'Lys-11'-linked polyubiquitin chains (in vitro); however the physiological significance of these data are unsure. Hydrolyzes both linear and branched forms of polyubiquitin. Acts as a regulator of mTORC1 and mTORC2 assembly by mediating 'Lys-63'-linked deubiquitination of MLST8, thereby promoting assembly of the mTORC2 complex, while inibiting formation of the mTORC1 complex. This chain is OTU domain-containing protein 7B (Otud7b), found in Mus musculus (Mouse).